The following is a 207-amino-acid chain: Ras-related protein Rab-2A (207 aa).

GTP is bound at residue 12–20 (GDTGVGKSC). The Effector region signature appears at 34–42 (HDLTIGVEF). Residues 60-64 (DTAGQ), 118-121 (NKSD), and 148-150 (SAK) each bind GTP. The interval 187–207 (GAPTSKQDGTDQKPAGGGCCK) is disordered. S-geranylgeranyl cysteine attachment occurs at residues C205 and C206.

This sequence belongs to the small GTPase superfamily. Rab family.

It is found in the cell membrane. The enzyme catalyses GTP + H2O = GDP + phosphate + H(+). Its activity is regulated as follows. Regulated by guanine nucleotide exchange factors (GEFs) which promote the exchange of bound GDP for free GTP, GTPase activating proteins (GAPs) which increase the GTP hydrolysis activity, and GDP dissociation inhibitors which inhibit the dissociation of the nucleotide from the GTPase. In terms of biological role, the small GTPases Rab are key regulators of intracellular membrane trafficking, from the formation of transport vesicles to their fusion with membranes. Rabs cycle between active GTP-bound and inactive GDP-bound states. In their active state, drive transport of vesicular carriers from donor organelles to acceptor organelles to regulate the membrane traffic that maintains organelle identity and morphology. The polypeptide is Ras-related protein Rab-2A (rab2A) (Dictyostelium discoideum (Social amoeba)).